The following is a 323-amino-acid chain: 4-hydroxy-3-methylbut-2-enyl diphosphate reductase (323 aa).

[4Fe-4S] cluster is bound at residue Cys-13. (2E)-4-hydroxy-3-methylbut-2-enyl diphosphate-binding residues include His-42 and His-75. Residues His-42 and His-75 each contribute to the dimethylallyl diphosphate site. Residues His-42 and His-75 each coordinate isopentenyl diphosphate. Cys-97 lines the [4Fe-4S] cluster pocket. His-125 contributes to the (2E)-4-hydroxy-3-methylbut-2-enyl diphosphate binding site. His-125 serves as a coordination point for dimethylallyl diphosphate. Residue His-125 coordinates isopentenyl diphosphate. Catalysis depends on Glu-127, which acts as the Proton donor. Position 168 (Thr-168) interacts with (2E)-4-hydroxy-3-methylbut-2-enyl diphosphate. Cys-198 contacts [4Fe-4S] cluster. (2E)-4-hydroxy-3-methylbut-2-enyl diphosphate-binding residues include Ser-226, Ser-227, Asn-228, and Ser-270. 4 residues coordinate dimethylallyl diphosphate: Ser-226, Ser-227, Asn-228, and Ser-270. Residues Ser-226, Ser-227, Asn-228, and Ser-270 each contribute to the isopentenyl diphosphate site.

The protein belongs to the IspH family. The cofactor is [4Fe-4S] cluster.

The catalysed reaction is isopentenyl diphosphate + 2 oxidized [2Fe-2S]-[ferredoxin] + H2O = (2E)-4-hydroxy-3-methylbut-2-enyl diphosphate + 2 reduced [2Fe-2S]-[ferredoxin] + 2 H(+). It catalyses the reaction dimethylallyl diphosphate + 2 oxidized [2Fe-2S]-[ferredoxin] + H2O = (2E)-4-hydroxy-3-methylbut-2-enyl diphosphate + 2 reduced [2Fe-2S]-[ferredoxin] + 2 H(+). Its pathway is isoprenoid biosynthesis; dimethylallyl diphosphate biosynthesis; dimethylallyl diphosphate from (2E)-4-hydroxy-3-methylbutenyl diphosphate: step 1/1. The protein operates within isoprenoid biosynthesis; isopentenyl diphosphate biosynthesis via DXP pathway; isopentenyl diphosphate from 1-deoxy-D-xylulose 5-phosphate: step 6/6. Its function is as follows. Catalyzes the conversion of 1-hydroxy-2-methyl-2-(E)-butenyl 4-diphosphate (HMBPP) into a mixture of isopentenyl diphosphate (IPP) and dimethylallyl diphosphate (DMAPP). Acts in the terminal step of the DOXP/MEP pathway for isoprenoid precursor biosynthesis. The polypeptide is 4-hydroxy-3-methylbut-2-enyl diphosphate reductase (Nitrosomonas europaea (strain ATCC 19718 / CIP 103999 / KCTC 2705 / NBRC 14298)).